A 426-amino-acid polypeptide reads, in one-letter code: MSKSENLYAQAQQLIPGGVNSPVRAFTGVGGIPLFIERADGAYLFDVDGKAYIDYVGSWGPMILGHNHPAIRQAVIEAVERGLSFGAPTEMEVKMAQLVTDLVPTMDMVRMVNSGTEATMSAIRLARGYTGRDKIIKFEGCYHGHADCLLVKAGSGALTLGQPNSPGVPTDFAKHTLTCTYNDLASVRQAFEQYPQEVACIIVEPVAGNMNCIPPLPEFLPGLRALCDEFGALLIIDEVMTGFRVALAGAQDYYHVIPDLTCLGKIIGGGMPVGAFGGRREVMNALAPTGPVYQAGTLSGNPIAMAAGFACLTEISQVGVYETLTELTDSLATGLRHAAKEENIPLVVNHVGGMFGLFFTNADTVTCYQDVMNCDVERFKRFFHLMLEEGVYLAPSAFEAGFMSLAHSNEDIQKTVNAARRCFAKL.

Lys-265 carries the N6-(pyridoxal phosphate)lysine modification.

The protein belongs to the class-III pyridoxal-phosphate-dependent aminotransferase family. HemL subfamily. Homodimer. It depends on pyridoxal 5'-phosphate as a cofactor.

Its subcellular location is the cytoplasm. It carries out the reaction (S)-4-amino-5-oxopentanoate = 5-aminolevulinate. It functions in the pathway porphyrin-containing compound metabolism; protoporphyrin-IX biosynthesis; 5-aminolevulinate from L-glutamyl-tRNA(Glu): step 2/2. The protein is Glutamate-1-semialdehyde 2,1-aminomutase of Yersinia pestis bv. Antiqua (strain Antiqua).